We begin with the raw amino-acid sequence, 277 residues long: 4-hydroxy-tetrahydrodipicolinate reductase (277 aa).

NAD(+) contacts are provided by residues 11–16 (GALGRM) and 110–112 (GTT). The active-site Proton donor/acceptor is the H166. H167 serves as a coordination point for (S)-2,3,4,5-tetrahydrodipicolinate. K170 functions as the Proton donor in the catalytic mechanism. Position 176-177 (176-177 (GT)) interacts with (S)-2,3,4,5-tetrahydrodipicolinate.

It belongs to the DapB family.

The protein localises to the cytoplasm. It carries out the reaction (S)-2,3,4,5-tetrahydrodipicolinate + NAD(+) + H2O = (2S,4S)-4-hydroxy-2,3,4,5-tetrahydrodipicolinate + NADH + H(+). It catalyses the reaction (S)-2,3,4,5-tetrahydrodipicolinate + NADP(+) + H2O = (2S,4S)-4-hydroxy-2,3,4,5-tetrahydrodipicolinate + NADPH + H(+). It participates in amino-acid biosynthesis; L-lysine biosynthesis via DAP pathway; (S)-tetrahydrodipicolinate from L-aspartate: step 4/4. Its function is as follows. Catalyzes the conversion of 4-hydroxy-tetrahydrodipicolinate (HTPA) to tetrahydrodipicolinate. The polypeptide is 4-hydroxy-tetrahydrodipicolinate reductase (Synechococcus sp. (strain CC9902)).